The chain runs to 456 residues: PTS system sucrose-specific EIIBC component (456 aa).

A PTS EIIB type-1 domain is found at 4–87 (EQISCSLLPL…TQAAGISESS (84 aa)). C26 serves as the catalytic Phosphocysteine intermediate; for EIIB activity. The region spanning 107-456 (RLLSNIFVPI…LVLKYKTDAE (350 aa)) is the PTS EIIC type-1 domain. The next 10 helical transmembrane spans lie at 112–132 (IFVP…LLGM), 144–164 (AIYI…PILI), 181–201 (TLGG…AAGF), 213–233 (MIGY…MSIV), 247–267 (LILT…LIIG), 288–308 (AGWL…ITGI), 329–349 (FLLP…LAVW), 360–380 (ITLP…IFGI), 388–408 (FIAA…VHVY), and 428–448 (LLNY…VSLV).

The protein resides in the cell inner membrane. It carries out the reaction N(pros)-phospho-L-histidyl-[protein](out) + sucrose = sucrose 6(G)-phosphate(in) + L-histidyl-[protein]. Its function is as follows. The phosphoenolpyruvate-dependent sugar phosphotransferase system (sugar PTS), a major carbohydrate active transport system, catalyzes the phosphorylation of incoming sugar substrates concomitantly with their translocation across the cell membrane. This system is involved in sucrose transport. The sequence is that of PTS system sucrose-specific EIIBC component from Salmonella typhimurium.